The primary structure comprises 237 residues: Adenosine 5'-phosphosulfate reductase (237 aa).

4 residues coordinate [4Fe-4S] cluster: cysteine 123, cysteine 124, cysteine 206, and cysteine 209. The active-site Nucleophile; cysteine thiosulfonate intermediate is the cysteine 232.

The protein belongs to the PAPS reductase family. CysH subfamily. The cofactor is [4Fe-4S] cluster.

It localises to the cytoplasm. It catalyses the reaction [thioredoxin]-disulfide + sulfite + AMP + 2 H(+) = adenosine 5'-phosphosulfate + [thioredoxin]-dithiol. It participates in sulfur metabolism; hydrogen sulfide biosynthesis; sulfite from sulfate. In terms of biological role, catalyzes the formation of sulfite from adenosine 5'-phosphosulfate (APS) using thioredoxin as an electron donor. This Mycobacteroides abscessus (strain ATCC 19977 / DSM 44196 / CCUG 20993 / CIP 104536 / JCM 13569 / NCTC 13031 / TMC 1543 / L948) (Mycobacterium abscessus) protein is Adenosine 5'-phosphosulfate reductase.